The following is a 181-amino-acid chain: Adenine phosphoribosyltransferase (181 aa).

This sequence belongs to the purine/pyrimidine phosphoribosyltransferase family. As to quaternary structure, homodimer.

It is found in the cytoplasm. The catalysed reaction is AMP + diphosphate = 5-phospho-alpha-D-ribose 1-diphosphate + adenine. The protein operates within purine metabolism; AMP biosynthesis via salvage pathway; AMP from adenine: step 1/1. Catalyzes a salvage reaction resulting in the formation of AMP, that is energically less costly than de novo synthesis. This is Adenine phosphoribosyltransferase from Chelativorans sp. (strain BNC1).